Consider the following 414-residue polypeptide: Gamma-glutamyl phosphate reductase (414 aa).

Belongs to the gamma-glutamyl phosphate reductase family.

The protein resides in the cytoplasm. The enzyme catalyses L-glutamate 5-semialdehyde + phosphate + NADP(+) = L-glutamyl 5-phosphate + NADPH + H(+). The protein operates within amino-acid biosynthesis; L-proline biosynthesis; L-glutamate 5-semialdehyde from L-glutamate: step 2/2. Its function is as follows. Catalyzes the NADPH-dependent reduction of L-glutamate 5-phosphate into L-glutamate 5-semialdehyde and phosphate. The product spontaneously undergoes cyclization to form 1-pyrroline-5-carboxylate. The sequence is that of Gamma-glutamyl phosphate reductase from Alkaliphilus metalliredigens (strain QYMF).